Consider the following 354-residue polypeptide: S-adenosylmethionine:tRNA ribosyltransferase-isomerase (354 aa).

The protein belongs to the QueA family. As to quaternary structure, monomer.

The protein localises to the cytoplasm. The enzyme catalyses 7-aminomethyl-7-carbaguanosine(34) in tRNA + S-adenosyl-L-methionine = epoxyqueuosine(34) in tRNA + adenine + L-methionine + 2 H(+). It functions in the pathway tRNA modification; tRNA-queuosine biosynthesis. Its function is as follows. Transfers and isomerizes the ribose moiety from AdoMet to the 7-aminomethyl group of 7-deazaguanine (preQ1-tRNA) to give epoxyqueuosine (oQ-tRNA). This Pseudomonas fluorescens (strain ATCC BAA-477 / NRRL B-23932 / Pf-5) protein is S-adenosylmethionine:tRNA ribosyltransferase-isomerase.